Here is a 230-residue protein sequence, read N- to C-terminus: Esterase OVCA2 (230 aa).

Catalysis depends on charge relay system residues Ser-124, Asp-182, and His-209.

This sequence belongs to the LovG family.

The catalysed reaction is a carboxylic ester + H2O = an alcohol + a carboxylate + H(+). Functionally, exhibits ester hydrolase activity with a strong preference for long-chain alkyl ester substrates and high selectivity against a variety of short, branched, and substituted esters. Is able to hydrolyze ester bonds within a wide range of p-nitrophenyl derivatives (C2-C14) in vitro, with a strong preference toward substrates of &gt;8 carbons. The polypeptide is Esterase OVCA2 (ovca2) (Xenopus tropicalis (Western clawed frog)).